The chain runs to 143 residues: Glutamate-rich protein 4 (143 aa).

The segment covering Leu-90–Gly-106 has biased composition (acidic residues). Residues Leu-90 to Ile-143 are disordered. Basic and acidic residues predominate over residues Glu-107 to Lys-116.

The protein is Glutamate-rich protein 4 (Erich4) of Rattus norvegicus (Rat).